Consider the following 202-residue polypeptide: HTH-type transcriptional regulator BetI 1 (202 aa).

In terms of domain architecture, HTH tetR-type spans 8-68 (PIRRRQLIQA…SAMRQILWDL (61 aa)). A DNA-binding region (H-T-H motif) is located at residues 31 to 50 (TIARIAKRAGVSAGIISHYF).

It participates in amine and polyamine biosynthesis; betaine biosynthesis via choline pathway [regulation]. In terms of biological role, repressor involved in the biosynthesis of the osmoprotectant glycine betaine. It represses transcription of the choline transporter BetT and the genes of BetAB involved in the synthesis of glycine betaine. This Chromohalobacter salexigens (strain ATCC BAA-138 / DSM 3043 / CIP 106854 / NCIMB 13768 / 1H11) protein is HTH-type transcriptional regulator BetI 1.